A 31-amino-acid chain; its full sequence is Cytochrome b6-f complex subunit 8 (31 aa).

A helical transmembrane segment spans residues 5–25 (IVSLAWAALMVVFTFSLSLVV).

Belongs to the PetN family. In terms of assembly, the 4 large subunits of the cytochrome b6-f complex are cytochrome b6, subunit IV (17 kDa polypeptide, PetD), cytochrome f and the Rieske protein, while the 4 small subunits are PetG, PetL, PetM and PetN. The complex functions as a dimer.

It localises to the plastid. Its subcellular location is the chloroplast thylakoid membrane. Component of the cytochrome b6-f complex, which mediates electron transfer between photosystem II (PSII) and photosystem I (PSI), cyclic electron flow around PSI, and state transitions. This chain is Cytochrome b6-f complex subunit 8, found in Cicer arietinum (Chickpea).